The primary structure comprises 167 residues: Photosystem I assembly protein Ycf3 (167 aa).

TPR repeat units lie at residues 35-68 (AFAY…EVDA), 72-105 (SYIL…NPSL), and 120-153 (GEQA…APTN).

Belongs to the Ycf3 family.

The protein resides in the plastid. It is found in the chloroplast thylakoid membrane. Functionally, essential for the assembly of the photosystem I (PSI) complex. May act as a chaperone-like factor to guide the assembly of the PSI subunits. The sequence is that of Photosystem I assembly protein Ycf3 from Stigeoclonium helveticum (Green alga).